The primary structure comprises 205 residues: Recombination protein RecR (205 aa).

A C4-type zinc finger spans residues 60–75 (CKVCHNISDTETCQIC). The Toprim domain maps to 83–178 (STVCVVENIR…KLSVIARGIS (96 aa)).

The protein belongs to the RecR family.

Functionally, may play a role in DNA repair. It seems to be involved in an RecBC-independent recombinational process of DNA repair. It may act with RecF and RecO. This Bacteroides thetaiotaomicron (strain ATCC 29148 / DSM 2079 / JCM 5827 / CCUG 10774 / NCTC 10582 / VPI-5482 / E50) protein is Recombination protein RecR.